Consider the following 249-residue polypeptide: Proteasome subunit alpha (249 aa).

Residues 229 to 249 are disordered; that stretch reads EAREAEEAAEAQSSEDGGATD.

It belongs to the peptidase T1A family. The 20S proteasome core is composed of 14 alpha and 14 beta subunits that assemble into four stacked heptameric rings, resulting in a barrel-shaped structure. The two inner rings, each composed of seven catalytic beta subunits, are sandwiched by two outer rings, each composed of seven alpha subunits. The catalytic chamber with the active sites is on the inside of the barrel. Has a gated structure, the ends of the cylinder being occluded by the N-termini of the alpha-subunits. Is capped by the proteasome-associated ATPase, ARC.

The protein resides in the cytoplasm. The protein operates within protein degradation; proteasomal Pup-dependent pathway. Its activity is regulated as follows. The formation of the proteasomal ATPase ARC-20S proteasome complex, likely via the docking of the C-termini of ARC into the intersubunit pockets in the alpha-rings, may trigger opening of the gate for substrate entry. Interconversion between the open-gate and close-gate conformations leads to a dynamic regulation of the 20S proteasome proteolysis activity. In terms of biological role, component of the proteasome core, a large protease complex with broad specificity involved in protein degradation. The sequence is that of Proteasome subunit alpha from Thermobifida fusca (strain YX).